The primary structure comprises 209 residues: Ribosomal RNA large subunit methyltransferase E (209 aa).

S-adenosyl-L-methionine contacts are provided by Gly-63, Trp-65, Asp-83, Asp-99, and Asp-124. Lys-164 (proton acceptor) is an active-site residue.

The protein belongs to the class I-like SAM-binding methyltransferase superfamily. RNA methyltransferase RlmE family.

It is found in the cytoplasm. It catalyses the reaction uridine(2552) in 23S rRNA + S-adenosyl-L-methionine = 2'-O-methyluridine(2552) in 23S rRNA + S-adenosyl-L-homocysteine + H(+). Its function is as follows. Specifically methylates the uridine in position 2552 of 23S rRNA at the 2'-O position of the ribose in the fully assembled 50S ribosomal subunit. The chain is Ribosomal RNA large subunit methyltransferase E from Pseudoalteromonas translucida (strain TAC 125).